A 316-amino-acid chain; its full sequence is 4-hydroxy-3-methylbut-2-enyl diphosphate reductase (316 aa).

Cys-12 lines the [4Fe-4S] cluster pocket. (2E)-4-hydroxy-3-methylbut-2-enyl diphosphate is bound by residues His-41 and His-74. The dimethylallyl diphosphate site is built by His-41 and His-74. Residues His-41 and His-74 each coordinate isopentenyl diphosphate. Cys-96 provides a ligand contact to [4Fe-4S] cluster. Residue His-124 coordinates (2E)-4-hydroxy-3-methylbut-2-enyl diphosphate. Position 124 (His-124) interacts with dimethylallyl diphosphate. Isopentenyl diphosphate is bound at residue His-124. The active-site Proton donor is the Glu-126. Thr-167 contacts (2E)-4-hydroxy-3-methylbut-2-enyl diphosphate. Cys-197 is a [4Fe-4S] cluster binding site. Residues Ser-225, Ser-226, Asn-227, and Ser-269 each contribute to the (2E)-4-hydroxy-3-methylbut-2-enyl diphosphate site. Ser-225, Ser-226, Asn-227, and Ser-269 together coordinate dimethylallyl diphosphate. Isopentenyl diphosphate is bound by residues Ser-225, Ser-226, Asn-227, and Ser-269.

Belongs to the IspH family. Homodimer. Requires [4Fe-4S] cluster as cofactor.

The catalysed reaction is isopentenyl diphosphate + 2 oxidized [2Fe-2S]-[ferredoxin] + H2O = (2E)-4-hydroxy-3-methylbut-2-enyl diphosphate + 2 reduced [2Fe-2S]-[ferredoxin] + 2 H(+). It carries out the reaction dimethylallyl diphosphate + 2 oxidized [2Fe-2S]-[ferredoxin] + H2O = (2E)-4-hydroxy-3-methylbut-2-enyl diphosphate + 2 reduced [2Fe-2S]-[ferredoxin] + 2 H(+). Its pathway is isoprenoid biosynthesis; dimethylallyl diphosphate biosynthesis; dimethylallyl diphosphate from (2E)-4-hydroxy-3-methylbutenyl diphosphate: step 1/1. The protein operates within isoprenoid biosynthesis; isopentenyl diphosphate biosynthesis via DXP pathway; isopentenyl diphosphate from 1-deoxy-D-xylulose 5-phosphate: step 6/6. In terms of biological role, catalyzes the conversion of 1-hydroxy-2-methyl-2-(E)-butenyl 4-diphosphate (HMBPP) into a mixture of isopentenyl diphosphate (IPP) and dimethylallyl diphosphate (DMAPP). Acts in the terminal step of the DOXP/MEP pathway for isoprenoid precursor biosynthesis. In Cronobacter sakazakii (strain ATCC BAA-894) (Enterobacter sakazakii), this protein is 4-hydroxy-3-methylbut-2-enyl diphosphate reductase.